A 247-amino-acid polypeptide reads, in one-letter code: Small ribosomal subunit protein uS3 (247 aa).

The KH type-2 domain occupies 38 to 106; sequence IRDFLSEGLD…QVQLNILEVK (69 aa). Residues 214–226 are compositionally biased toward basic and acidic residues; that stretch reads SLMNARDERPSRG. The disordered stretch occupies residues 214–247; that stretch reads SLMNARDERPSRGRRERPRRGGARRQRAEQKQEG. Residues 227–238 are compositionally biased toward basic residues; that stretch reads RRERPRRGGARR.

Belongs to the universal ribosomal protein uS3 family. As to quaternary structure, part of the 30S ribosomal subunit. Forms a tight complex with proteins S10 and S14.

Binds the lower part of the 30S subunit head. Binds mRNA in the 70S ribosome, positioning it for translation. The chain is Small ribosomal subunit protein uS3 from Corynebacterium jeikeium (strain K411).